A 146-amino-acid chain; its full sequence is Catabolic 3-dehydroquinase (146 aa).

Residue Tyr-24 is the Proton acceptor of the active site. Substrate contacts are provided by Asn-78, His-84, and Asp-91. The Proton donor role is filled by His-104. Residues 105-106 (IT) and Arg-115 each bind substrate.

This sequence belongs to the type-II 3-dehydroquinase family. Homododecamer. Adopts a ring-like structure, composed of an arrangement of two hexameric rings stacked on top of one another.

The enzyme catalyses 3-dehydroquinate = 3-dehydroshikimate + H2O. The protein operates within aromatic compound metabolism; 3,4-dihydroxybenzoate biosynthesis; 3,4-dihydroxybenzoate from 3-dehydroquinate: step 1/2. Is involved in the catabolism of quinate. Allows the utilization of quinate as carbon source via the beta-ketoadipate pathway. In Meyerozyma guilliermondii (strain ATCC 6260 / CBS 566 / DSM 6381 / JCM 1539 / NBRC 10279 / NRRL Y-324) (Yeast), this protein is Catabolic 3-dehydroquinase.